Reading from the N-terminus, the 267-residue chain is 4-hydroxy-tetrahydrodipicolinate reductase (267 aa).

NAD(+) is bound by residues 8–13 (GAAGRM) and glutamate 34. Residue arginine 35 coordinates NADP(+). Residues 98 to 100 (GST) and 122 to 125 (APNM) contribute to the NAD(+) site. Histidine 155 serves as the catalytic Proton donor/acceptor. Histidine 156 lines the (S)-2,3,4,5-tetrahydrodipicolinate pocket. The active-site Proton donor is the lysine 159. Residue 165–166 (GT) participates in (S)-2,3,4,5-tetrahydrodipicolinate binding.

This sequence belongs to the DapB family.

The protein resides in the cytoplasm. The catalysed reaction is (S)-2,3,4,5-tetrahydrodipicolinate + NAD(+) + H2O = (2S,4S)-4-hydroxy-2,3,4,5-tetrahydrodipicolinate + NADH + H(+). It catalyses the reaction (S)-2,3,4,5-tetrahydrodipicolinate + NADP(+) + H2O = (2S,4S)-4-hydroxy-2,3,4,5-tetrahydrodipicolinate + NADPH + H(+). It participates in amino-acid biosynthesis; L-lysine biosynthesis via DAP pathway; (S)-tetrahydrodipicolinate from L-aspartate: step 4/4. In terms of biological role, catalyzes the conversion of 4-hydroxy-tetrahydrodipicolinate (HTPA) to tetrahydrodipicolinate. The protein is 4-hydroxy-tetrahydrodipicolinate reductase of Citrifermentans bemidjiense (strain ATCC BAA-1014 / DSM 16622 / JCM 12645 / Bem) (Geobacter bemidjiensis).